A 220-amino-acid polypeptide reads, in one-letter code: CRIB domain-containing protein RIC3 (220 aa).

Residues 28–41 (IGFPTDVKHVAHIG) enclose the CRIB domain. The disordered stretch occupies residues 39–220 (HIGSDGPATN…CNDNNISDKE (182 aa)). Over residues 61–77 (NENGQVVSRADANNNQI) the composition is skewed to polar residues. Residues 108–121 (NGSPPRRNSSASAS) are compositionally biased toward low complexity. 2 stretches are compositionally biased toward basic residues: residues 127–136 (NTRRHHRSRH) and 172–184 (HSRK…RKPK). Positions 209-220 (DTCNDNNISDKE) are enriched in polar residues.

Interacts with ARAC11/ROP1. In terms of tissue distribution, expressed in flowers and pollen.

It localises to the cytoplasm. Functionally, functions as a downstream effector of Rho-related GTP binding proteins of the 'Rho of Plants' (ROPs) family. Participates in the propagation of ROP GTPase signals in specific cellular responses. Functions as a downstream effector of ARAC11/ROP1 to activate calcium signaling that leads to F-actin disassembly associated with exocytosis in the tip of the growing pollen tube. Counteracts the ARAC11/ROP1-RIC4 pathway, which promotes apical F-actin assembly associated with vesicle accumulation, to control actin dynamics and pollen tube apical growth. The sequence is that of CRIB domain-containing protein RIC3 (RIC3) from Arabidopsis thaliana (Mouse-ear cress).